Reading from the N-terminus, the 386-residue chain is Phosphoglycerate kinase (386 aa).

Residues 21–23, Arg36, 59–62, Arg112, and Arg145 each bind substrate; these read DLN and HLGR. ATP contacts are provided by residues Lys196, Glu313, and 339 to 342; that span reads GGDT.

It belongs to the phosphoglycerate kinase family. As to quaternary structure, monomer.

Its subcellular location is the cytoplasm. The enzyme catalyses (2R)-3-phosphoglycerate + ATP = (2R)-3-phospho-glyceroyl phosphate + ADP. It functions in the pathway carbohydrate degradation; glycolysis; pyruvate from D-glyceraldehyde 3-phosphate: step 2/5. The chain is Phosphoglycerate kinase from Haemophilus influenzae (strain PittEE).